Consider the following 420-residue polypeptide: D-tagatose-1,6-bisphosphate aldolase subunit GatZ (420 aa).

The protein belongs to the GatZ/KbaZ family. GatZ subfamily. Forms a complex with GatY.

It participates in carbohydrate metabolism; D-tagatose 6-phosphate degradation; D-glyceraldehyde 3-phosphate and glycerone phosphate from D-tagatose 6-phosphate: step 2/2. In terms of biological role, component of the tagatose-1,6-bisphosphate aldolase GatYZ that is required for full activity and stability of the Y subunit. Could have a chaperone-like function for the proper and stable folding of GatY. When expressed alone, GatZ does not show any aldolase activity. Is involved in the catabolism of galactitol. The sequence is that of D-tagatose-1,6-bisphosphate aldolase subunit GatZ from Escherichia coli O8 (strain IAI1).